The following is a 367-amino-acid chain: Probable outer membrane usher protein LpfC (367 aa).

The N-terminal stretch at 1–30 (MSRKTVSRTFSSFSISVVAVAVASTFSAHA) is a signal peptide.

Belongs to the fimbrial export usher family.

The protein localises to the cell outer membrane. Part of the lpfABCC'DE fimbrial operon. LP fimbriae may participate in the interaction with eukaryotic cells by assisting in microcolony formation. Could be involved in the export and assembly of the fimbrial subunits across the outer membrane. This is Probable outer membrane usher protein LpfC (lpfC) from Escherichia coli O157:H7.